The primary structure comprises 262 residues: MREAVIAEVSTQLSEVVGVIERHLEPTLLAVHLYGSAVDGGLKPHSDIDLLVTVTVRLDETTRRALINDLLETSASPGESEILRAVEVTIVVHDDIIPWRYPAKRELQFGEWQRNDILAGIFEPATIDIDLAILLTKAREHSVALVGPAAEELFDPVPEQDLFEALNETLTLWNSPPDWAGDERNVVLTLSRIWYSAVTGKIAPKDVAADWAMERLPAQYQPVILEARQAYLGQEDRLASRADQLEEFVHYVKGEITKVVGK.

The catalysed reaction is streptomycin + ATP = 3''-O-adenylylstreptomycin + diphosphate. It carries out the reaction spectinomycin + ATP = 9-O-adenylylspectinomycin + diphosphate. Functionally, mediates bacterial resistance to the antibiotics streptomycin and spectinomycin. The chain is Aminoglycoside (3'') (9) adenylyltransferase from Shigella flexneri.